Consider the following 346-residue polypeptide: [LysW]-lysine/[LysW]-ornithine hydrolase (346 aa).

His67 lines the Zn(2+) pocket. The active site involves Asp69. Asp91 provides a ligand contact to Zn(2+). Glu121 serves as the catalytic Proton acceptor. The Zn(2+) site is built by Glu122, Glu145, and His316.

The protein belongs to the peptidase M20A family. LysK subfamily. Zn(2+) is required as a cofactor. It depends on Co(2+) as a cofactor.

It is found in the cytoplasm. It catalyses the reaction [amino-group carrier protein]-C-terminal-gamma-(L-lysyl)-L-glutamate + H2O = [amino-group carrier protein]-C-terminal-L-glutamate + L-lysine. The catalysed reaction is [amino-group carrier protein]-C-terminal-gamma-(L-ornithyl)-L-glutamate + H2O = [amino-group carrier protein]-C-terminal-L-glutamate + L-ornithine. Its pathway is amino-acid biosynthesis; L-lysine biosynthesis via AAA pathway; L-lysine from L-alpha-aminoadipate (Thermus route): step 5/5. It participates in amino-acid biosynthesis; L-arginine biosynthesis. Its function is as follows. Catalyzes the release of L-lysine from [LysW]-gamma-L-lysine and the release of L-ornithine from [LysW]-L-ornithine. In Sulfurisphaera tokodaii (strain DSM 16993 / JCM 10545 / NBRC 100140 / 7) (Sulfolobus tokodaii), this protein is [LysW]-lysine/[LysW]-ornithine hydrolase.